The following is a 474-amino-acid chain: Transcription factor SOX-4 (474 aa).

Polar residues predominate over residues 1 to 10 (MVQQTNNAEN). The tract at residues 1-58 (MVQQTNNAENTEALLAGESSDSGAGLELGIASSPTPGSTASTGGKADDPSWCKTPSGH) is disordered. Residues 31 to 44 (ASSPTPGSTASTGG) are compositionally biased toward low complexity. Residues 59–127 (IKRPMNAFMV…KHMADYPDYK (69 aa)) constitute a DNA-binding region (HMG box). N6-acetyllysine is present on K95. 3 disordered regions span residues 128–228 (YRPR…GGGK), 262–286 (ARTPSASASASSAASASAALAAPGK), and 302–416 (LGTS…NFES). Residues 138 to 149 (NANSSSSAAASS) show a composition bias toward low complexity. Over residues 158–189 (VGGSGGGGHGGGGGGGSSNAGGGGGGASGGGA) the composition is skewed to gly residues. Low complexity-rich tracts occupy residues 266 to 283 (SASASASSAASASAALAA), 304 to 320 (TSSSPVGGVGAGADPSD), 336 to 354 (APSLSGRSSAASSPAAGRS), and 366 to 396 (AASPAPSSAPSHASSSASSHSSSSSSSGSSS). Positions 397–406 (SDDEFEDDLL) are enriched in acidic residues. The span at 407–416 (DLNPSSNFES) shows a compositional bias: low complexity. The 9aaTAD signature appears at 426 to 434 (SALDRDLDF).

In terms of assembly, interacts with UBE2I. Interacts with HDAC1; interaction inhibits the transcriptional activator activity. Acetylation at Lys-95 by KAT5 promotes the transcription activator activity and is required during myoblast differentiation. Acetylation by KAT5 abolishes the interaction between SOX4 and HDAC1 and switches SOX4 into a transcriptional activator. As to expression, testis, brain, and heart.

Its subcellular location is the nucleus. Its function is as follows. Transcriptional activator that binds with high affinity to the T-cell enhancer motif 5'-AACAAAG-3' motif. Required for IL17A-producing Vgamma2-positive gamma-delta T-cell maturation and development, via binding to regulator loci of RORC to modulate expression. Involved in skeletal myoblast differentiation by promoting gene expression of CALD1. This Homo sapiens (Human) protein is Transcription factor SOX-4.